A 346-amino-acid chain; its full sequence is Short-wave-sensitive opsin 1 (346 aa).

The Extracellular portion of the chain corresponds to 1–31 (MSGEDEFYLFQNISSVGPWDGPQYHIAPVWA). Residue asparagine 12 is glycosylated (N-linked (GlcNAc...) asparagine). A helical transmembrane segment spans residues 32 to 56 (FHLQAAFMGFVFFAGTPLNATVLVA). The Cytoplasmic segment spans residues 57 to 68 (TLHYKKLRQPLN). Residues 69 to 94 (YILVNVSLGGFLFCIFSVFTVFIASC) form a helical membrane-spanning segment. Topologically, residues 95–108 (HGYFLFGRHVCALE) are extracellular. A disulfide bridge links cysteine 105 with cysteine 182. Residues 109-128 (AFLGSVAGLVTGWSLAFLAF) traverse the membrane as a helical segment. The Cytoplasmic segment spans residues 129–147 (ERYLVICKPFGNIRFNSKH). The chain crosses the membrane as a helical span at residues 148 to 171 (ALTVVLITWTIGIGVSIPPFFGWS). The Extracellular portion of the chain corresponds to 172–197 (RFIPEGLQCSCGPDWYTVGTKYRSEH). A helical membrane pass occupies residues 198-225 (YTWFLFIFCFIIPLSLICFSYFQLLRTL). Topologically, residues 226 to 247 (RAVAAQQQESATTQKAEREVSH) are cytoplasmic. A helical transmembrane segment spans residues 248 to 271 (MVVVMVGSFCLCYVPYAALAMYMV). Residues 272 to 279 (NNRNHGLY) are Extracellular-facing. Residues 280-304 (LRLVTIPAFFSKSSCVYNPIIYCFM) traverse the membrane as a helical segment. The residue at position 291 (lysine 291) is an N6-(retinylidene)lysine. The Cytoplasmic segment spans residues 305 to 346 (NKQFRACILEMVCRKPMTDESDMSGSQKTEVSTVSSSKVGPH). Residues 322 to 346 (TDESDMSGSQKTEVSTVSSSKVGPH) form a disordered region. Positions 330-346 (SQKTEVSTVSSSKVGPH) are enriched in low complexity.

It belongs to the G-protein coupled receptor 1 family. Opsin subfamily. Phosphorylated on some or all of the serine and threonine residues present in the C-terminal region. Expressed in cone photoreceptor cells.

It localises to the cell membrane. The protein localises to the photoreceptor inner segment. Its subcellular location is the cell projection. It is found in the cilium. The protein resides in the photoreceptor outer segment. It localises to the cytoplasm. The protein localises to the perinuclear region. Functionally, visual pigments are the light-absorbing molecules that mediate vision. They consist of an apoprotein, opsin, covalently linked to cis-retinal. Required for the maintenance of cone outer segment organization in the ventral retina, but not essential for the maintenance of functioning cone photoreceptors. Involved in ensuring correct abundance and localization of retinal membrane proteins. May increase spectral sensitivity in dim light. The protein is Short-wave-sensitive opsin 1 (Opn1sw) of Rattus norvegicus (Rat).